Reading from the N-terminus, the 1372-residue chain is DNA-directed RNA polymerase subunit beta (1372 aa).

The protein belongs to the RNA polymerase beta chain family. In terms of assembly, the RNAP catalytic core consists of 2 alpha, 1 beta, 1 beta' and 1 omega subunit. When a sigma factor is associated with the core the holoenzyme is formed, which can initiate transcription.

The catalysed reaction is RNA(n) + a ribonucleoside 5'-triphosphate = RNA(n+1) + diphosphate. Functionally, DNA-dependent RNA polymerase catalyzes the transcription of DNA into RNA using the four ribonucleoside triphosphates as substrates. This is DNA-directed RNA polymerase subunit beta from Psychrobacter arcticus (strain DSM 17307 / VKM B-2377 / 273-4).